A 194-amino-acid chain; its full sequence is Cysteine and glycine-rich protein 3 (194 aa).

The segment at 1 to 5 (MPNWG) is interaction with TCAP. The region spanning 10–61 (CGACEKTVYHAEEIQCNGRSFHKTCFHCMACRKALDSTTVAAHESEIYCKVC) is the LIM zinc-binding 1 domain. Positions 64-69 (RRYGPK) match the Nuclear localization signal motif. An interaction with CLF2 region spans residues 94–105 (QSPKPARAATTS). Phosphoserine is present on residues Ser-95, Ser-111, and Ser-153. The 52-residue stretch at 120–171 (CPRCGKSVYAAEKVMGGGKPWHKTCFRCAICGKSLESTNVTDKDGELYCKVC) folds into the LIM zinc-binding 2 domain.

Self-associates. Oligomeric in the cytoplasm and monomeric in the nucleus. Homooligomers preferentially form along the actin cytoskeleton. Interacts with TCAP. Interacts with LDHD, MYOD1, MYOG, ACTN2, NRAP, MYF6. Interacts (via N-terminus)D with GLRX3 (via C-terminus) and PPP3CA; GLRX3 and calcineurin compete for interaction with CSRP3. Interacts with CFL2; the stoichiometry influences F-actin depolymerization and possibly two molecules of CFL2 can interact with one molecule of CSRP3 resulting in the highest functional impact; the interaction is stronger with phosphorylated CFL2. In terms of processing, phosphorylated by PKC/PRKCA.

The protein resides in the nucleus. Its subcellular location is the cytoplasm. The protein localises to the cytoskeleton. It is found in the myofibril. It localises to the sarcomere. The protein resides in the z line. Functionally, positive regulator of myogenesis. Acts as a cofactor for myogenic bHLH transcription factors such as MYOD1, and probably MYOG and MYF6. Enhances the DNA-binding activity of the MYOD1:TCF3 isoform E47 complex and may promote formation of a functional MYOD1:TCF3 isoform E47:MEF2A complex involved in myogenesis. Plays a crucial and specific role in the organization of cytosolic structures in cardiomyocytes. Could play a role in mechanical stretch sensing. May be a scaffold protein that promotes the assembly of interacting proteins at Z-line structures. It is essential for calcineurin anchorage to the Z line. Required for stress-induced calcineurin-NFAT activation. The role in regulation of cytoskeleton dynamics by association with CFL2 is reported conflictingly. Proposed to contribute to the maintenance of muscle cell integrity through an actin-based mechanism. Can directly bind to actin filaments, cross-link actin filaments into bundles without polarity selectivity and protect them from dilution- and cofilin-mediated depolymerization; the function seems to involve its self-association. In vitro can inhibit PKC/PRKCA activity. Proposed to be involved in cardiac stress signaling by down-regulating excessive PKC/PRKCA signaling. The protein is Cysteine and glycine-rich protein 3 (Csrp3) of Mus musculus (Mouse).